The primary structure comprises 113 residues: Urocortin-2 (113 aa).

The first 23 residues, 1-23 (MMTRWALVVFVVLMLDRILFVPG), serve as a signal peptide directing secretion. Residues 24 to 71 (TPIPTFQLLPQNSLETTPSSVTSESSSGTTTGPSASWSNSKASPYLDT) constitute a propeptide that is removed on maturation. A compositionally biased stretch (low complexity) spans 37–61 (LETTPSSVTSESSSGTTTGPSASWS). The interval 37–64 (LETTPSSVTSESSSGTTTGPSASWSNSK) is disordered. Val-110 carries the valine amide; partial modification.

This sequence belongs to the sauvagine/corticotropin-releasing factor/urotensin I family. As to quaternary structure, binds with high affinity to CRF receptors 2-alpha and 2-beta. Post-translationally, glycosylated.

The protein localises to the secreted. Functionally, suppresses food intake, delays gastric emptying and decreases heat-induced edema. Might represent an endogenous ligand for maintaining homeostasis after stress. This Mus musculus (Mouse) protein is Urocortin-2 (Ucn2).